A 440-amino-acid polypeptide reads, in one-letter code: 3-phosphoshikimate 1-carboxyvinyltransferase (440 aa).

3-phosphoshikimate-binding residues include lysine 19, serine 20, and arginine 24. Lysine 19 contacts phosphoenolpyruvate. 2 residues coordinate phosphoenolpyruvate: glycine 92 and arginine 121. Positions 166, 168, 315, and 342 each coordinate 3-phosphoshikimate. Glutamine 168 serves as a coordination point for phosphoenolpyruvate. Catalysis depends on aspartate 315, which acts as the Proton acceptor. Residues arginine 346 and arginine 399 each coordinate phosphoenolpyruvate.

Belongs to the EPSP synthase family. Monomer.

Its subcellular location is the cytoplasm. It carries out the reaction 3-phosphoshikimate + phosphoenolpyruvate = 5-O-(1-carboxyvinyl)-3-phosphoshikimate + phosphate. It functions in the pathway metabolic intermediate biosynthesis; chorismate biosynthesis; chorismate from D-erythrose 4-phosphate and phosphoenolpyruvate: step 6/7. Functionally, catalyzes the transfer of the enolpyruvyl moiety of phosphoenolpyruvate (PEP) to the 5-hydroxyl of shikimate-3-phosphate (S3P) to produce enolpyruvyl shikimate-3-phosphate and inorganic phosphate. This Leptospira borgpetersenii serovar Hardjo-bovis (strain JB197) protein is 3-phosphoshikimate 1-carboxyvinyltransferase.